We begin with the raw amino-acid sequence, 364 residues long: Salivary endonuclease (364 aa).

A signal peptide spans 1–24 (MSSFFLSISPLVLALFHVVVQVCS). N-linked (GlcNAc...) asparagine glycosylation is present at Asn285.

Belongs to the DNA/RNA non-specific endonuclease family. Mg(2+) serves as cofactor. As to expression, saliva (at protein level). Female salivary gland.

It localises to the secreted. Functionally, hydrolyzes double-stranded DNA with no sequence specificity. Does not cleave ssDNA and RNA. May facilitate blood meal intake by lowering the local viscosity created by the release of host DNA. This Culex quinquefasciatus (Southern house mosquito) protein is Salivary endonuclease.